Reading from the N-terminus, the 279-residue chain is Protease HtpX homolog (279 aa).

Helical transmembrane passes span Ile4 to Val24 and Gly34 to Met54. His140 serves as a coordination point for Zn(2+). The active site involves Glu141. Residue His144 coordinates Zn(2+). 2 consecutive transmembrane segments (helical) span residues Leu155–Ile175 and Phe189–Trp209. Glu215 provides a ligand contact to Zn(2+).

Belongs to the peptidase M48B family. Requires Zn(2+) as cofactor.

The protein resides in the cell inner membrane. The chain is Protease HtpX homolog from Neisseria meningitidis serogroup B (strain ATCC BAA-335 / MC58).